A 423-amino-acid polypeptide reads, in one-letter code: Acyl-coenzyme A diphosphatase FITM2 (423 aa).

Residues 1 to 47 form a disordered region; the sequence is MATKRRPLRPNLGGTAGSPSSSGSNMNFRPGGPDITRSEARGTRPTA. Residues 1–75 lie on the Cytoplasmic side of the membrane; sequence MATKRRPLRP…KTIFFNTDLK (75 aa). The helical transmembrane segment at 76 to 96 threads the bilayer; it reads VALYLGSLFVISVIGDFVPFP. At 97–113 the chain is on the lumenal side; it reads KTYFARSDNLFNQYFVK. Residues 114–134 traverse the membrane as a helical segment; sequence IGWGWTLLFVVPFLVLSAYTI. Residues 135-146 lie on the Cytoplasmic side of the membrane; it reads TCGDHKRMLRHH. A helical transmembrane segment spans residues 147–167; the sequence is FPRIVIATFFWFFWTKLFNVV. Topologically, residues 168–191 are lumenal; that stretch reads ENSYGRCTTKGYATKSSCLKAGHL. A helical membrane pass occupies residues 192 to 212; that stretch reads WKGFDISGHAFILIHSSLVLI. His-200 is an active-site residue. Topologically, residues 213–270 are cytoplasmic; it reads EEARPIIRWETIKEHIRNERHNRSTAENSGTNPLRTLNEEQMRSLQFLYKRLTPIIRT. A helical transmembrane segment spans residues 271 to 291; sequence LFIGMAALQLLWDIMLVGTML. Over 292–299 the chain is Lumenal; that stretch reads YYHRMIEK. His-294 is a catalytic residue. Residues 300 to 320 traverse the membrane as a helical segment; it reads VISGIIAILTWYFTYRFWYPT. At 321–423 the chain is on the cytoplasmic side; that stretch reads PGLLPEAPGN…RDREQQTLES (103 aa). Disordered regions lie at residues 344-381 and 400-423; these read FKRP…PRDQ and AAAN…TLES. Residues 351–367 are compositionally biased toward low complexity; that stretch reads STGAATTSSGSNSSRTN. Residues 409–423 are compositionally biased toward basic and acidic residues; the sequence is QQKRERDREQQTLES.

Belongs to the FIT family. FIT2 subfamily.

It is found in the endoplasmic reticulum membrane. It carries out the reaction an acyl-CoA + H2O = an acyl-4'-phosphopantetheine + adenosine 3',5'-bisphosphate + 2 H(+). Its function is as follows. Fatty acyl-coenzyme A (CoA) diphosphatase that hydrolyzes fatty acyl-CoA to yield acyl-4'-phosphopantetheine and adenosine 3',5'-bisphosphate. Preferentially hydrolyzes unsaturated long-chain acyl-CoA substrates in the endoplasmic reticulum (ER) lumen. This catalytic activity is required for maintaining ER structure and for lipid droplets (LDs) biogenesis, which are lipid storage organelles involved in maintaining lipid and energy homeostasis. May directly bind to diacylglycerol (DAGs) and triacylglycerol, which is also important for LD biogenesis. May support directional budding of nacent LDs from the ER into the cytosol by reducing DAG levels at sites of LD formation. Plays a role in the regulation of cell morphology and cytoskeletal organization. Required for correct morphology of nociceptive multi-dendritic sensory neurons. Required for normal mechanical amplification in hearing. The protein is Acyl-coenzyme A diphosphatase FITM2 of Drosophila melanogaster (Fruit fly).